A 187-amino-acid chain; its full sequence is Ribosome maturation factor RimM (187 aa).

A PRC barrel domain is found at 96-169 (EDEFFYADLE…KLVIDPTAAG (74 aa)).

This sequence belongs to the RimM family. In terms of assembly, binds ribosomal protein uS19.

The protein localises to the cytoplasm. In terms of biological role, an accessory protein needed during the final step in the assembly of 30S ribosomal subunit, possibly for assembly of the head region. Essential for efficient processing of 16S rRNA. May be needed both before and after RbfA during the maturation of 16S rRNA. It has affinity for free ribosomal 30S subunits but not for 70S ribosomes. The chain is Ribosome maturation factor RimM from Rhizobium meliloti (strain 1021) (Ensifer meliloti).